A 390-amino-acid chain; its full sequence is Succinate--CoA ligase [ADP-forming] subunit beta (390 aa).

One can recognise an ATP-grasp domain in the interval 9 to 248; sequence KEILRRHKAN…ITEEDPLEVQ (240 aa). ATP contacts are provided by residues Lys-50, 57–59, Glu-103, Ile-106, and Glu-111; that span reads GRG. Residues Asn-203 and Asp-217 each contribute to the Mg(2+) site. Substrate-binding positions include Asn-268 and 325–327; that span reads GIV.

The protein belongs to the succinate/malate CoA ligase beta subunit family. Heterotetramer of two alpha and two beta subunits. The cofactor is Mg(2+).

It carries out the reaction succinate + ATP + CoA = succinyl-CoA + ADP + phosphate. The catalysed reaction is GTP + succinate + CoA = succinyl-CoA + GDP + phosphate. It participates in carbohydrate metabolism; tricarboxylic acid cycle; succinate from succinyl-CoA (ligase route): step 1/1. In terms of biological role, succinyl-CoA synthetase functions in the citric acid cycle (TCA), coupling the hydrolysis of succinyl-CoA to the synthesis of either ATP or GTP and thus represents the only step of substrate-level phosphorylation in the TCA. The beta subunit provides nucleotide specificity of the enzyme and binds the substrate succinate, while the binding sites for coenzyme A and phosphate are found in the alpha subunit. The polypeptide is Succinate--CoA ligase [ADP-forming] subunit beta (Leptospira interrogans serogroup Icterohaemorrhagiae serovar copenhageni (strain Fiocruz L1-130)).